We begin with the raw amino-acid sequence, 158 residues long: NADH-quinone oxidoreductase subunit B (158 aa).

The [4Fe-4S] cluster site is built by C37, C38, C102, and C132.

Belongs to the complex I 20 kDa subunit family. NDH-1 is composed of 14 different subunits. Subunits NuoB, C, D, E, F, and G constitute the peripheral sector of the complex. Requires [4Fe-4S] cluster as cofactor.

It localises to the cell inner membrane. It catalyses the reaction a quinone + NADH + 5 H(+)(in) = a quinol + NAD(+) + 4 H(+)(out). NDH-1 shuttles electrons from NADH, via FMN and iron-sulfur (Fe-S) centers, to quinones in the respiratory chain. Couples the redox reaction to proton translocation (for every two electrons transferred, four hydrogen ions are translocated across the cytoplasmic membrane), and thus conserves the redox energy in a proton gradient. This chain is NADH-quinone oxidoreductase subunit B, found in Bordetella petrii (strain ATCC BAA-461 / DSM 12804 / CCUG 43448).